The chain runs to 385 residues: Succinate--CoA ligase [ADP-forming] subunit beta (385 aa).

The ATP-grasp domain occupies 9-244 (KEVLRKYGVS…LDEEDPKEIE (236 aa)). Residues K46, 53–55 (GRG), E99, C102, and E107 each bind ATP. Mg(2+) is bound by residues N199 and D213. Substrate-binding positions include N264 and 321 to 323 (GIM).

Belongs to the succinate/malate CoA ligase beta subunit family. As to quaternary structure, heterotetramer of two alpha and two beta subunits. Requires Mg(2+) as cofactor.

The catalysed reaction is succinate + ATP + CoA = succinyl-CoA + ADP + phosphate. The enzyme catalyses GTP + succinate + CoA = succinyl-CoA + GDP + phosphate. The protein operates within carbohydrate metabolism; tricarboxylic acid cycle; succinate from succinyl-CoA (ligase route): step 1/1. Succinyl-CoA synthetase functions in the citric acid cycle (TCA), coupling the hydrolysis of succinyl-CoA to the synthesis of either ATP or GTP and thus represents the only step of substrate-level phosphorylation in the TCA. The beta subunit provides nucleotide specificity of the enzyme and binds the substrate succinate, while the binding sites for coenzyme A and phosphate are found in the alpha subunit. The polypeptide is Succinate--CoA ligase [ADP-forming] subunit beta (Bacillus velezensis (strain DSM 23117 / BGSC 10A6 / LMG 26770 / FZB42) (Bacillus amyloliquefaciens subsp. plantarum)).